The following is a 388-amino-acid chain: Chorismate synthase (388 aa).

The NADP(+) site is built by arginine 39 and arginine 45. Residues 130–132, 251–252, glycine 296, 311–315, and arginine 337 each bind FMN; these read RSS, NA, and KPIPT.

This sequence belongs to the chorismate synthase family. Homotetramer. FMNH2 is required as a cofactor.

It catalyses the reaction 5-O-(1-carboxyvinyl)-3-phosphoshikimate = chorismate + phosphate. The protein operates within metabolic intermediate biosynthesis; chorismate biosynthesis; chorismate from D-erythrose 4-phosphate and phosphoenolpyruvate: step 7/7. Functionally, catalyzes the anti-1,4-elimination of the C-3 phosphate and the C-6 proR hydrogen from 5-enolpyruvylshikimate-3-phosphate (EPSP) to yield chorismate, which is the branch point compound that serves as the starting substrate for the three terminal pathways of aromatic amino acid biosynthesis. This reaction introduces a second double bond into the aromatic ring system. In Geobacillus sp. (strain WCH70), this protein is Chorismate synthase.